The sequence spans 261 residues: Indole-3-glycerol phosphate synthase (261 aa).

The protein belongs to the TrpC family.

It catalyses the reaction 1-(2-carboxyphenylamino)-1-deoxy-D-ribulose 5-phosphate + H(+) = (1S,2R)-1-C-(indol-3-yl)glycerol 3-phosphate + CO2 + H2O. It functions in the pathway amino-acid biosynthesis; L-tryptophan biosynthesis; L-tryptophan from chorismate: step 4/5. The chain is Indole-3-glycerol phosphate synthase from Burkholderia ambifaria (strain MC40-6).